Reading from the N-terminus, the 102-residue chain is NADH-quinone oxidoreductase subunit K 1 (102 aa).

3 helical membrane passes run 6 to 26 (LNAY…GVLV), 31 to 51 (LAIL…FVAF), and 65 to 85 (FLVI…TVLL).

It belongs to the complex I subunit 4L family. In terms of assembly, NDH-1 is composed of 14 different subunits. Subunits NuoA, H, J, K, L, M, N constitute the membrane sector of the complex.

It localises to the cell membrane. The catalysed reaction is a quinone + NADH + 5 H(+)(in) = a quinol + NAD(+) + 4 H(+)(out). Its function is as follows. NDH-1 shuttles electrons from NADH, via FMN and iron-sulfur (Fe-S) centers, to quinones in the respiratory chain. The immediate electron acceptor for the enzyme in this species is believed to be a menaquinone. Couples the redox reaction to proton translocation (for every two electrons transferred, four hydrogen ions are translocated across the cytoplasmic membrane), and thus conserves the redox energy in a proton gradient. This is NADH-quinone oxidoreductase subunit K 1 from Symbiobacterium thermophilum (strain DSM 24528 / JCM 14929 / IAM 14863 / T).